Consider the following 170-residue polypeptide: Peptide deformylase (170 aa).

Fe cation contacts are provided by cysteine 94 and histidine 136. The active site involves glutamate 137. A Fe cation-binding site is contributed by histidine 140.

The protein belongs to the polypeptide deformylase family. Fe(2+) is required as a cofactor.

It carries out the reaction N-terminal N-formyl-L-methionyl-[peptide] + H2O = N-terminal L-methionyl-[peptide] + formate. Removes the formyl group from the N-terminal Met of newly synthesized proteins. Requires at least a dipeptide for an efficient rate of reaction. N-terminal L-methionine is a prerequisite for activity but the enzyme has broad specificity at other positions. In Xylella fastidiosa (strain M12), this protein is Peptide deformylase.